We begin with the raw amino-acid sequence, 385 residues long: UDP-N-acetylglucosamine--N-acetylmuramyl-(pentapeptide) pyrophosphoryl-undecaprenol N-acetylglucosamine transferase (385 aa).

UDP-N-acetyl-alpha-D-glucosamine-binding positions include 11-13, Asn117, Arg160, Ser215, and Gln317; that span reads TGG.

This sequence belongs to the glycosyltransferase 28 family. MurG subfamily.

It is found in the cell inner membrane. The enzyme catalyses di-trans,octa-cis-undecaprenyl diphospho-N-acetyl-alpha-D-muramoyl-L-alanyl-D-glutamyl-meso-2,6-diaminopimeloyl-D-alanyl-D-alanine + UDP-N-acetyl-alpha-D-glucosamine = di-trans,octa-cis-undecaprenyl diphospho-[N-acetyl-alpha-D-glucosaminyl-(1-&gt;4)]-N-acetyl-alpha-D-muramoyl-L-alanyl-D-glutamyl-meso-2,6-diaminopimeloyl-D-alanyl-D-alanine + UDP + H(+). The protein operates within cell wall biogenesis; peptidoglycan biosynthesis. Functionally, cell wall formation. Catalyzes the transfer of a GlcNAc subunit on undecaprenyl-pyrophosphoryl-MurNAc-pentapeptide (lipid intermediate I) to form undecaprenyl-pyrophosphoryl-MurNAc-(pentapeptide)GlcNAc (lipid intermediate II). The polypeptide is UDP-N-acetylglucosamine--N-acetylmuramyl-(pentapeptide) pyrophosphoryl-undecaprenol N-acetylglucosamine transferase (Rickettsia typhi (strain ATCC VR-144 / Wilmington)).